Reading from the N-terminus, the 187-residue chain is POM121 and ZP3 fusion protein (187 aa).

A disordered region spans residues 166 to 187; the sequence is GTPSHSRRQPRVVSQWSTSASL. A compositionally biased stretch (polar residues) spans 177 to 187; it reads VVSQWSTSASL.

In terms of tissue distribution, expressed in spleen, thymus, pancreas, testis, ovary, small intestine, colon and lymphocytes.

The sequence is that of POM121 and ZP3 fusion protein (POMZP3) from Homo sapiens (Human).